Reading from the N-terminus, the 644-residue chain is Interleukin-23 receptor (644 aa).

An N-terminal signal peptide occupies residues 1-23; it reads MSHLTLQLHVVIALYVLFRWCHG. Residues 24-374 are Extracellular-facing; it reads GITSINCSGD…PASGNHQDIG (351 aa). N-linked (GlcNAc...) asparagine glycans are attached at residues Asn47, Asn130, and Asn232. Fibronectin type-III domains lie at 127–217 and 219–318; these read APSN…LDDI and IPSA…TSQE. Residues 375 to 395 form a helical membrane-spanning segment; the sequence is LLSGMVFLAIMLPIFSLIGIF. At 396–644 the chain is on the cytoplasmic side; that stretch reads NRSLRIGIKR…HFSRISLFQK (249 aa).

The protein belongs to the type I cytokine receptor family. Type 2 subfamily. In terms of assembly, heterodimer with IL12RB1. In presence of IL23, the heterodimer forms the IL23 receptor. Interacts with JAK2 and in presence of IL23 with STAT3. In terms of processing, phosphorylated in response to IL23. As to expression, expressed by Th1, Th2 and dendritic cells.

The protein localises to the cell membrane. Its function is as follows. Associates with IL12RB1 to form the interleukin-23 receptor. Binds IL23 and mediates T-cells, NK cells and possibly certain macrophage/myeloid cells stimulation probably through activation of the Jak-Stat signaling cascade. IL23 functions in innate and adaptive immunity and may participate in acute response to infection in peripheral tissues. IL23 may be responsible for autoimmune inflammatory diseases and be important for tumorigenesis. The protein is Interleukin-23 receptor (Il23r) of Mus musculus (Mouse).